Reading from the N-terminus, the 341-residue chain is Pyrophosphate--fructose 6-phosphate 1-phosphotransferase (341 aa).

Position 10 (glycine 10) interacts with diphosphate. Glutamate 103 contributes to the Mg(2+) binding site. Substrate is bound by residues 125–127 (TID), arginine 162, 169–171 (MGR), glutamate 221, arginine 265, and 271–274 (HVQR). Aspartate 127 serves as the catalytic Proton acceptor.

Belongs to the phosphofructokinase type A (PFKA) family. Mixed-substrate PFK group III subfamily. As to quaternary structure, homodimer or homotetramer. The cofactor is Mg(2+).

It is found in the cytoplasm. It catalyses the reaction beta-D-fructose 6-phosphate + diphosphate = beta-D-fructose 1,6-bisphosphate + phosphate + H(+). It participates in carbohydrate degradation; glycolysis; D-glyceraldehyde 3-phosphate and glycerone phosphate from D-glucose: step 3/4. With respect to regulation, non-allosteric. Its function is as follows. Catalyzes the phosphorylation of D-fructose 6-phosphate, the first committing step of glycolysis. Uses inorganic phosphate (PPi) as phosphoryl donor instead of ATP like common ATP-dependent phosphofructokinases (ATP-PFKs), which renders the reaction reversible, and can thus function both in glycolysis and gluconeogenesis. Consistently, PPi-PFK can replace the enzymes of both the forward (ATP-PFK) and reverse (fructose-bisphosphatase (FBPase)) reactions. The polypeptide is Pyrophosphate--fructose 6-phosphate 1-phosphotransferase (Amycolatopsis mediterranei (strain S699) (Nocardia mediterranei)).